Consider the following 309-residue polypeptide: Short-chain dehydrogenase/reductase ARMGADRAFT_1048226 (309 aa).

Positions 64, 86, 113, and 145 each coordinate NADP(+). Ser167 serves as the catalytic Proton donor. Positions 196 and 200 each coordinate NADP(+). Tyr196 functions as the Proton acceptor in the catalytic mechanism. Lys200 (lowers pKa of active site Tyr) is an active-site residue.

This sequence belongs to the short-chain dehydrogenases/reductases (SDR) family.

It functions in the pathway secondary metabolite biosynthesis. In terms of biological role, short-chain dehydrogenase/reductase, part of the gene cluster that mediates the biosynthesis of melleolides, a range of antifungal and phytotoxic polyketide derivatives composed of an orsellinic acid (OA) moiety esterified to various sesquiterpene alcohols. The first step in melleolides biosynthesis is performed by the delta(6)-protoilludene synthase PRO1 which catalyzes the cyclization of farnesyl diphosphate to protoilludene. The orsellinic acid synthase armB produces OA by condensing acetyl-CoA with 3 malonyl-CoA units in a three-round chain elongation reaction folowed by a C2-C7 ring closure. ArmB further catalyzes the trans-esterification of OA to the various sesquiterpene alcohols resulting from the hydroxylation of protoilludene. The melleolides cluster also includes 5 cytochrome P450 monooxygenases, 4 NAD(+)-dependent oxidoreductases, one flavin-dependent oxidoreductase, and one O-methyltransferase. The cytochrome P450 monooxygenases may be involved in protoilludene hydroxylation to elaborate melleolides with multiple alcohol groups, such as melleolide D, which carries alcohol functionalities at C-4, C-5, C-10, and C-13. The role of the NAD(+)-dependent enzymes remains unknown. Numerous melleolides, including arnamial, show 5'-O-methylation of the aromatic moiety which may be catalyzed by the methyltransferase encoded in the cluster. The flavin-dependent oxidoreductase might represent the dehydrogenase yielding the aldehyde in position 1 of arnamial and other melleolides. Finally, several halogenase localized outside of the cluster, are able to catalyze the transfer of a single chlorine atom to the melleolide backbone, resulting in a 6'-chloromelleolide product. This is Short-chain dehydrogenase/reductase ARMGADRAFT_1048226 from Armillaria gallica (Bulbous honey fungus).